The following is a 521-amino-acid chain: GMP synthase [glutamine-hydrolyzing] (521 aa).

The 193-residue stretch at 5–197 (KILILDFGSQ…VLDICGAQPG (193 aa)) folds into the Glutamine amidotransferase type-1 domain. Cys81 acts as the Nucleophile in catalysis. Residues His171 and Glu173 contribute to the active site. Residues 198–390 (WTMPNYIEEA…LGLPREMVYR (193 aa)) enclose the GMPS ATP-PPase domain. 225 to 231 (SGGVDSS) provides a ligand contact to ATP.

Homodimer.

The enzyme catalyses XMP + L-glutamine + ATP + H2O = GMP + L-glutamate + AMP + diphosphate + 2 H(+). The protein operates within purine metabolism; GMP biosynthesis; GMP from XMP (L-Gln route): step 1/1. In terms of biological role, catalyzes the synthesis of GMP from XMP. This is GMP synthase [glutamine-hydrolyzing] from Neisseria gonorrhoeae (strain NCCP11945).